The chain runs to 258 residues: Putative ankyrin repeat domain-containing protein 30B-like (258 aa).

The interval methionine 1–phenylalanine 21 is disordered. ANK repeat units lie at residues lysine 71–valine 100, glutamate 104–isoleucine 133, tyrosine 137–valine 166, and alanine 170–alanine 199. Positions lysine 216 to glutamate 258 are disordered. Polar residues predominate over residues serine 218–glycine 232. Over residues arginine 243 to glutamate 258 the composition is skewed to basic and acidic residues.

This Homo sapiens (Human) protein is Putative ankyrin repeat domain-containing protein 30B-like (ANKRD30BL).